Consider the following 736-residue polypeptide: 1,4-alpha-glucan branching enzyme GlgB (736 aa).

Catalysis depends on aspartate 419, which acts as the Nucleophile. Glutamate 472 (proton donor) is an active-site residue.

This sequence belongs to the glycosyl hydrolase 13 family. GlgB subfamily. As to quaternary structure, monomer.

The catalysed reaction is Transfers a segment of a (1-&gt;4)-alpha-D-glucan chain to a primary hydroxy group in a similar glucan chain.. It functions in the pathway glycan biosynthesis; glycogen biosynthesis. Catalyzes the formation of the alpha-1,6-glucosidic linkages in glycogen by scission of a 1,4-alpha-linked oligosaccharide from growing alpha-1,4-glucan chains and the subsequent attachment of the oligosaccharide to the alpha-1,6 position. The protein is 1,4-alpha-glucan branching enzyme GlgB of Rhizobium meliloti (strain 1021) (Ensifer meliloti).